We begin with the raw amino-acid sequence, 291 residues long: 4-diphosphocytidyl-2-C-methyl-D-erythritol kinase (291 aa).

The active site involves K8. 89 to 99 (PIGSGIGGGSS) lines the ATP pocket. Residue D131 is part of the active site.

Belongs to the GHMP kinase family. IspE subfamily.

The catalysed reaction is 4-CDP-2-C-methyl-D-erythritol + ATP = 4-CDP-2-C-methyl-D-erythritol 2-phosphate + ADP + H(+). It functions in the pathway isoprenoid biosynthesis; isopentenyl diphosphate biosynthesis via DXP pathway; isopentenyl diphosphate from 1-deoxy-D-xylulose 5-phosphate: step 3/6. In terms of biological role, catalyzes the phosphorylation of the position 2 hydroxy group of 4-diphosphocytidyl-2C-methyl-D-erythritol. The sequence is that of 4-diphosphocytidyl-2-C-methyl-D-erythritol kinase from Chlamydia abortus (strain DSM 27085 / S26/3) (Chlamydophila abortus).